The primary structure comprises 1462 residues: uncharacterized protein (1462 aa).

A helical membrane pass occupies residues 119–139 (TGYITSLCLSAILKFFSFRII). Ser-411 and Ser-420 each carry phosphoserine. Positions 541–730 (TLIESKKRKA…SEIYKAIKEN (190 aa)) constitute an SEC7 domain. One copy of the HEAT repeat lies at 1102-1139 (ENSEDWGLFSKLCNLLNDKNIVVRNQSLSLFHQLVNKY).

Its subcellular location is the cytoplasm. The protein resides in the golgi apparatus membrane. This is an uncharacterized protein from Schizosaccharomyces pombe (strain 972 / ATCC 24843) (Fission yeast).